The sequence spans 329 residues: Quinone oxidoreductase (329 aa).

The residue at position 2 (Ala2) is an N-acetylalanine. At Lys23 the chain carries N6-acetyllysine. Residues Tyr53, 158-161, Gly181, His200, Asn229, 246-249, and 269-271 contribute to the NADP(+) site; these read SGGV, VGSR, and VAL. Ser248 bears the Phosphoserine mark.

This sequence belongs to the zinc-containing alcohol dehydrogenase family. Quinone oxidoreductase subfamily. Homotetramer.

It localises to the cytoplasm. The catalysed reaction is 2 a quinone + NADPH + H(+) = 2 a 1,4-benzosemiquinone + NADP(+). Functionally, does not have alcohol dehydrogenase activity. Binds NADP and acts through a one-electron transfer process. Orthoquinones, such as 1,2-naphthoquinone or 9,10-phenanthrenequinone, are the best substrates (in vitro). May act in the detoxification of xenobiotics. Interacts with (AU)-rich elements (ARE) in the 3'-UTR of target mRNA species and enhances their stability. NADPH binding interferes with mRNA binding. This Sus scrofa (Pig) protein is Quinone oxidoreductase (CRYZ).